The following is a 227-amino-acid chain: Probable methylthioribulose-1-phosphate dehydratase (227 aa).

Residue C87 coordinates substrate. Residues H105 and H107 each contribute to the Zn(2+) site. The active-site Proton donor/acceptor is the E129. Residue H185 participates in Zn(2+) binding.

The protein belongs to the aldolase class II family. MtnB subfamily. It depends on Zn(2+) as a cofactor.

Its subcellular location is the cytoplasm. The enzyme catalyses 5-(methylsulfanyl)-D-ribulose 1-phosphate = 5-methylsulfanyl-2,3-dioxopentyl phosphate + H2O. It functions in the pathway amino-acid biosynthesis; L-methionine biosynthesis via salvage pathway; L-methionine from S-methyl-5-thio-alpha-D-ribose 1-phosphate: step 2/6. In terms of biological role, catalyzes the dehydration of methylthioribulose-1-phosphate (MTRu-1-P) into 2,3-diketo-5-methylthiopentyl-1-phosphate (DK-MTP-1-P). The chain is Probable methylthioribulose-1-phosphate dehydratase from Drosophila ananassae (Fruit fly).